A 203-amino-acid chain; its full sequence is LexA repressor (203 aa).

The H-T-H motif DNA-binding region spans 28–48 (RAEIASQLGFRSPNAAEEHLK). Catalysis depends on for autocatalytic cleavage activity residues Ser120 and Lys157.

It belongs to the peptidase S24 family. Homodimer.

The enzyme catalyses Hydrolysis of Ala-|-Gly bond in repressor LexA.. Represses a number of genes involved in the response to DNA damage (SOS response), including recA and lexA. Binds to the 16 bp palindromic sequence 5'-CTGTATATATATACAG-3'. In the presence of single-stranded DNA, RecA interacts with LexA causing an autocatalytic cleavage which disrupts the DNA-binding part of LexA, leading to derepression of the SOS regulon and eventually DNA repair. This is LexA repressor from Proteus mirabilis (strain HI4320).